A 337-amino-acid chain; its full sequence is Fructose-1,6-bisphosphatase class 1 (337 aa).

Residues glutamate 91, aspartate 113, leucine 115, and aspartate 116 each coordinate Mg(2+). Substrate-binding positions include 116–119 (DGSS), asparagine 209, tyrosine 242, and lysine 275. Mg(2+) is bound at residue glutamate 281.

It belongs to the FBPase class 1 family. As to quaternary structure, homotetramer. Mg(2+) serves as cofactor.

Its subcellular location is the cytoplasm. It carries out the reaction beta-D-fructose 1,6-bisphosphate + H2O = beta-D-fructose 6-phosphate + phosphate. Its pathway is carbohydrate biosynthesis; gluconeogenesis. In Nitratidesulfovibrio vulgaris (strain DP4) (Desulfovibrio vulgaris), this protein is Fructose-1,6-bisphosphatase class 1.